A 188-amino-acid chain; its full sequence is Proline-rich protein 3 (188 aa).

The segment at 1–157 (MPKRKKQNQH…DPQVMEDKSD (157 aa)) is disordered. Pro residues-rich tracts occupy residues 35-46 (IGPPSLLGPPPM) and 69-82 (LIPP…PPWG). A compositionally biased stretch (low complexity) spans 83-96 (RGPIRRGLGPRSSP). Positions 145–157 (PKDDPQVMEDKSD) are enriched in basic and acidic residues. A C3H1-type zinc finger spans residues 155–183 (KSDRPVCRHFAKKGHCRYEDLCAFYHPGV).

This chain is Proline-rich protein 3 (PRR3), found in Pan troglodytes (Chimpanzee).